A 396-amino-acid polypeptide reads, in one-letter code: L-lactate dehydrogenase (396 aa).

An FMN hydroxy acid dehydrogenase domain is found at 1–380; the sequence is MIISAASDYR…SGDSLVQELG (380 aa). Y24 is a binding site for substrate. 2 residues coordinate FMN: S106 and Q127. Residue Y129 participates in substrate binding. T155 contacts FMN. A substrate-binding site is contributed by R164. K251 is a binding site for FMN. H275 serves as the catalytic Proton acceptor. A substrate-binding site is contributed by R278. Position 306–330 (306–330) interacts with FMN; the sequence is DSGIRNGLDVVRMIALGADTVLLGR.

The protein belongs to the FMN-dependent alpha-hydroxy acid dehydrogenase family. FMN is required as a cofactor.

It is found in the cell inner membrane. The enzyme catalyses (S)-lactate + A = pyruvate + AH2. Catalyzes the conversion of L-lactate to pyruvate. Is coupled to the respiratory chain. The sequence is that of L-lactate dehydrogenase from Salmonella typhimurium (strain LT2 / SGSC1412 / ATCC 700720).